The sequence spans 57 residues: Large ribosomal subunit protein bL33 (57 aa).

This sequence belongs to the bacterial ribosomal protein bL33 family.

The sequence is that of Large ribosomal subunit protein bL33 from Akkermansia muciniphila (strain ATCC BAA-835 / DSM 22959 / JCM 33894 / BCRC 81048 / CCUG 64013 / CIP 107961 / Muc).